We begin with the raw amino-acid sequence, 1873 residues long: Girdin (1873 aa).

In terms of domain architecture, Calponin-homology (CH) spans 12–132 (QFMTSPLVTW…KLLLLLLGCA (121 aa)). Residues 196-425 (HLRRLIDERD…EMAQKQSMDE (230 aa)) are a coiled coil. A phosphoserine mark is found at S233, S237, and S449. Coiled coils occupy residues 458-1232 (TSSK…ESKN) and 1268-1385 (HKNL…KFYD). Disordered stretches follow at residues 816–841 (ENKS…NKRL) and 1013–1034 (EERM…GRES). Residue S1020 is modified to Phosphoserine. Residue S1387 is modified to Phosphoserine. The interval 1390–1408 (RRRGNWITLKMRKLIKSKK) is phosphoinositide-binding. Residues 1407–1416 (KKDINRERQK) show a composition bias toward basic and acidic residues. Disordered regions lie at residues 1407–1459 (KKDI…LGTK), 1560–1602 (TTSF…SNNN), and 1616–1643 (QSRP…GSSP). S1417 is subject to Phosphoserine; by PKB/AKT1. 4 stretches are compositionally biased toward polar residues: residues 1417–1430 (SLTL…SSEG), 1445–1459 (VGSN…LGTK), 1560–1579 (TTSF…STGS), and 1616–1626 (QSRPQSHSSGD). T1421 carries the post-translational modification Phosphothreonine. The short motif at 1674–1704 (KAGSPGSEVVTLQQFLEESNKLTSIQLKSSS) is the GBA element. S1677, S1692, and S1719 each carry phosphoserine. Positions 1715–1825 (SLSVSSDFLG…GTTRRTSIHD (111 aa)) are SH2-like; required for interaction with growth factor receptors. Residues 1738–1873 (SGKTPGDFYD…KSRSREQQSS (136 aa)) form a disordered region. Residues 1745–1755 (FYDRRTTKPEF) are compositionally biased toward basic and acidic residues. Position 1767 is a phosphotyrosine (Y1767). Composition is skewed to polar residues over residues 1768–1781 (TISS…STQG), 1789–1801 (TSVS…SNPY), and 1809–1820 (SVISTAEGTTRR). Y1801 is subject to Phosphotyrosine. 2 positions are modified to phosphoserine: S1822 and S1839. Basic and acidic residues predominate over residues 1822-1832 (SIHDFLSKDSR). A compositionally biased stretch (low complexity) spans 1839-1852 (SSPPTAGSSSTTAS). Residues 1858–1873 (QESRNSKSRSREQQSS) are compositionally biased toward basic and acidic residues.

This sequence belongs to the CCDC88 family. As to quaternary structure, homodimer. Interacts (via GBA motif) with guanine nucleotide-binding protein G(i) alpha subunits GNAI1, GNAI2 and GNAI3. Also interacts (via GNA motif) with guanine nucleotide-binding protein G(s) alpha subunit GNAS. Interaction with G(i) alpha subunits occurs before interaction with GNAS and is regulated by phosphorylation; phosphorylation at Ser-1677 enhances binding to G(i) alpha subunits while phosphorylation at Ser-1692 abolishes G(i) alpha subunit binding, promoting binding to GNAS. Interacts (via C-terminal SH2-like region) with growth factor receptors EGFR, INSR and KDR/VEGFR2 (via their autophosphorylated cytoplasmic tails). Forms a complex with EGFR and GNAI3 which leads to enhanced EGFR signaling and triggering of cell migration; ligand stimulation is required for recruitment of GNAI3 to the complex. Interacts (tyrosine-phosphorylated form) with phosphatidylinositol 3-kinase (PI3K) regulatory subunit PIK3R1/p85a (via SH2 domains); the interaction enables recruitment of PIK3R1 to the EGFR receptor, enhancing PI3K activity and cell migration. Interacts with serine/threonine-protein kinase PRKCQ; the interaction leads to phosphorylation of CCDC88A and inhibition of its guanine nucleotide exchange factor activity. Interacts (via C-terminus) with DISC1; the interaction is direct. Interacts with AKT proteins; the interaction is inhibited in the presence of DISC1. Interacts with AKT1/PKB (via C-terminus). The non-phosphorylated form interacts with phosphatidylinositol 4-phosphate [Pi(4)P] and weakly with phosphatidylinositol 3-phosphate [Pi(3)P]. Interacts with microtubules. Interacts with actin. In terms of processing, phosphorylation is induced by epidermal growth factor (EGF) in a phosphoinositide 3-kinase (PI3K)-dependent manner. Phosphorylation by AKT1/PKB is necessary for the delocalization from the cell membrane and for cell migration. Phosphorylated on tyrosine residues which promotes binding to phosphatidylinositol 3-kinase (PI3K) regulatory subunit PIK3R1/p85a and enhances PI3K activity. Tyrosine-phosphorylated by both receptor and non-receptor tyrosine kinases in vitro. Tyrosine phosphorylation is required for AKT1-dependent phosphorylation of Ser-1417. Phosphorylation at Ser-1692 by PRKCQ disrupts interaction with GNAI3 and inhibits guanine nucleotide exchange factor activity. In terms of tissue distribution, expressed in the dentate gyrus, pyramidal cell layer of hippocampal regions CA1 and CA3 at postnatal 15. Expressed highly in neurons. Weakly in neuron progenitors (at protein level). Expressed in the dentate granule cell layer of the hippocampus. Expressed highly in the adult testis, moderately in the brain and at a low level in the spleen, lungs and fat.

The protein resides in the cell membrane. It is found in the cytoplasm. Its subcellular location is the cytosol. The protein localises to the cytoplasmic vesicle. It localises to the cell projection. The protein resides in the lamellipodium. It is found in the cytoskeleton. Its subcellular location is the cilium basal body. The protein localises to the microtubule organizing center. It localises to the centrosome. The protein resides in the centriole. Bifunctional modulator of guanine nucleotide-binding proteins (G proteins). Acts as a non-receptor guanine nucleotide exchange factor which binds to and activates guanine nucleotide-binding protein G(i) alpha subunits. Also acts as a guanine nucleotide dissociation inhibitor for guanine nucleotide-binding protein G(s) subunit alpha GNAS. Essential for cell migration. Interacts in complex with G(i) alpha subunits with the EGFR receptor, retaining EGFR at the cell membrane following ligand stimulation and promoting EGFR signaling which triggers cell migration. Binding to Gi-alpha subunits displaces the beta and gamma subunits from the heterotrimeric G-protein complex which enhances phosphoinositide 3-kinase (PI3K)-dependent phosphorylation and kinase activity of AKT1/PKB. Phosphorylation of AKT1/PKB induces the phosphorylation of downstream effectors GSK3 and FOXO1/FKHR, and regulates DNA replication and cell proliferation. Binds in its tyrosine-phosphorylated form to the phosphatidylinositol 3-kinase (PI3K) regulatory subunit PIK3R1 which enables recruitment of PIK3R1 to the EGFR receptor, enhancing PI3K activity and cell migration. Plays a role as a key modulator of the AKT-mTOR signaling pathway, controlling the tempo of the process of newborn neuron integration during adult neurogenesis, including correct neuron positioning, dendritic development and synapse formation. Inhibition of G(s) subunit alpha GNAS leads to reduced cellular levels of cAMP and suppression of cell proliferation. Essential for the integrity of the actin cytoskeleton. Required for formation of actin stress fibers and lamellipodia. May be involved in membrane sorting in the early endosome. Plays a role in ciliogenesis and cilium morphology and positioning and this may partly be through regulation of the localization of scaffolding protein CROCC/Rootletin. The sequence is that of Girdin (Ccdc88a) from Mus musculus (Mouse).